We begin with the raw amino-acid sequence, 373 residues long: Cobalt-precorrin-5B C(1)-methyltransferase (373 aa).

The protein belongs to the CbiD family.

It catalyses the reaction Co-precorrin-5B + S-adenosyl-L-methionine = Co-precorrin-6A + S-adenosyl-L-homocysteine. It functions in the pathway cofactor biosynthesis; adenosylcobalamin biosynthesis; cob(II)yrinate a,c-diamide from sirohydrochlorin (anaerobic route): step 6/10. Catalyzes the methylation of C-1 in cobalt-precorrin-5B to form cobalt-precorrin-6A. This chain is Cobalt-precorrin-5B C(1)-methyltransferase, found in Listeria monocytogenes serotype 4a (strain HCC23).